The sequence spans 239 residues: Uridylate kinase (239 aa).

13 to 16 (KLSG) is a binding site for ATP. Residue Gly-55 coordinates UMP. Positions 56 and 60 each coordinate ATP. UMP contacts are provided by residues Asp-75 and 136 to 143 (TGNPFFTT). The ATP site is built by Thr-163, Tyr-169, and Asp-172.

Belongs to the UMP kinase family. Homohexamer.

The protein localises to the cytoplasm. It catalyses the reaction UMP + ATP = UDP + ADP. The protein operates within pyrimidine metabolism; CTP biosynthesis via de novo pathway; UDP from UMP (UMPK route): step 1/1. With respect to regulation, inhibited by UTP. Functionally, catalyzes the reversible phosphorylation of UMP to UDP. This chain is Uridylate kinase, found in Chromobacterium violaceum (strain ATCC 12472 / DSM 30191 / JCM 1249 / CCUG 213 / NBRC 12614 / NCIMB 9131 / NCTC 9757 / MK).